Consider the following 331-residue polypeptide: Doxorubicin resistance ATP-binding protein DrrA (331 aa).

Positions 8-240 (VVVNGVRKTY…AGDTFCEIVP (233 aa)) constitute an ABC transporter domain. 42-49 (GPNGAGKT) contacts ATP.

Belongs to the ABC transporter superfamily. Drug exporter-1 (DrugE1) (TC 3.A.1.105) family. As to quaternary structure, the complex is composed of two ATP-binding proteins (DrrA) and two transmembrane proteins (DrrB and DrrC).

It is found in the cell membrane. Its function is as follows. Part of the ABC transporter complex DrrABC involved in doxorubicin resistance. Responsible for energy coupling to the transport system. Binds ATP. The sequence is that of Doxorubicin resistance ATP-binding protein DrrA (drrA) from Mycobacterium tuberculosis (strain CDC 1551 / Oshkosh).